A 172-amino-acid polypeptide reads, in one-letter code: MATQQVDSRRQVAAEQVAAQLLERRRGSHCDDEKQTLLALLILVLYLSTEIWGSSWEVSERIRECNYYQNLAVPQGLEYQTNEPSEEPIKTIRNWLKEKLHVFSEKLEEEVQQLEQLAWDLELWLDALLGEPHQEEHCSTYKSHLWEWAWALGREHKGGEGLLEISLSGAEL.

Residues 1 to 36 (MATQQVDSRRQVAAEQVAAQLLERRRGSHCDDEKQT) lie on the Cytoplasmic side of the membrane. A helical; Signal-anchor for type II membrane protein membrane pass occupies residues 37–53 (LLALLILVLYLSTEIWG). Residues 54–172 (SSWEVSERIR…LEISLSGAEL (119 aa)) lie on the Extracellular side of the membrane. Residues 96-128 (LKEKLHVFSEKLEEEVQQLEQLAWDLELWLDAL) adopt a coiled-coil conformation.

Its subcellular location is the cell membrane. This is Small integral membrane protein 23 (SMIM23) from Homo sapiens (Human).